The chain runs to 108 residues: uncharacterized protein (108 aa).

This is an uncharacterized protein from Bacillus subtilis (strain 168).